A 106-amino-acid chain; its full sequence is N(2)-fixation sustaining protein CowN (106 aa).

It belongs to the CowN family.

Functionally, is required to sustain N(2)-dependent growth in the presence of low levels of carbon monoxide (CO). Probably acts by protecting the N(2) fixation ability of the nitrogenase complex, which is inactivated in the presence of CO. This is N(2)-fixation sustaining protein CowN from Denitrovibrio acetiphilus (strain DSM 12809 / NBRC 114555 / N2460).